Consider the following 662-residue polypeptide: A-kinase anchor protein 10, mitochondrial (662 aa).

Residues 1 to 28 constitute a mitochondrion transit peptide; the sequence is MRGAGPSPRQSPRTLRPDPGPAMSFFRR. Positions 1-55 are disordered; that stretch reads MRGAGPSPRQSPRTLRPDPGPAMSFFRRKVKGKEQEKTSDVKSIKASISVHSPQK. The segment covering 32-43 has biased composition (basic and acidic residues); that stretch reads GKEQEKTSDVKS. Phosphoserine is present on residues Ser52 and Ser189. 2 RGS domains span residues 125 to 369 and 379 to 505; these read TLEQ…CKYQ and YLAD…YKYL. Residues 261–280 show a composition bias toward polar residues; the sequence is SMETQESSSTLTVASRNSPA. Positions 261–282 are disordered; that stretch reads SMETQESSSTLTVASRNSPASP. The residue at position 281 (Ser281) is a Phosphoserine. Residues 524 to 548 are disordered; sequence LTAPGSVGPPDESHPGSSDSSASQS. Positions 634–647 are PKA-RII subunit binding; the sequence is LAWKIAKMIVSDIM.

Its subcellular location is the mitochondrion. It localises to the membrane. The protein localises to the cytoplasm. In terms of biological role, differentially targeted protein that binds to type I and II regulatory subunits of protein kinase A and anchors them to the mitochondria or the plasma membrane. Although the physiological relevance between PKA and AKAPS with mitochondria is not fully understood, one idea is that BAD, a proapoptotic member, is phosphorylated and inactivated by mitochondria-anchored PKA. It cannot be excluded too that it may facilitate PKA as well as G protein signal transduction, by acting as an adapter for assembling multiprotein complexes. With its RGS domain, it could lead to the interaction to G-alpha proteins, providing a link between the signaling machinery and the downstream kinase. This Homo sapiens (Human) protein is A-kinase anchor protein 10, mitochondrial (AKAP10).